The following is a 1141-amino-acid chain: Eukaryotic translation initiation factor 3 subunit A (1141 aa).

The 183-residue stretch at 319-501 (LQRMAAHVLL…NSIYFGTDLT (183 aa)) folds into the PCI domain. Basic and acidic residues-rich tracts occupy residues 588-623 (QNNA…EERE) and 829-899 (AAEE…RGGD). Disordered stretches follow at residues 588-631 (QNNA…QNEI) and 829-1141 (AAEE…VKRR). S908 carries the phosphoserine modification. Basic and acidic residues-rich tracts occupy residues 920–976 (ERND…EPDT), 990–1051 (SRDD…EPQR), 1059–1087 (DAPR…RGDQ), and 1110–1131 (TREE…KAGD).

It belongs to the eIF-3 subunit A family. As to quaternary structure, component of the eukaryotic translation initiation factor 3 (eIF-3) complex. The eIF-3 complex interacts with pix.

It localises to the cytoplasm. Its function is as follows. RNA-binding component of the eukaryotic translation initiation factor 3 (eIF-3) complex, which is involved in protein synthesis of a specialized repertoire of mRNAs and, together with other initiation factors, stimulates binding of mRNA and methionyl-tRNAi to the 40S ribosome. The eIF-3 complex specifically targets and initiates translation of a subset of mRNAs involved in cell proliferation. The chain is Eukaryotic translation initiation factor 3 subunit A from Drosophila simulans (Fruit fly).